A 479-amino-acid polypeptide reads, in one-letter code: Ribulose bisphosphate carboxylase large chain (479 aa).

Positions 1-2 are excised as a propeptide; the sequence is MS. Asn123 and Thr173 together coordinate substrate. The active-site Proton acceptor is Lys175. Lys177 serves as a coordination point for substrate. Mg(2+)-binding residues include Lys201, Asp203, and Glu204. Lys201 carries the N6-carboxylysine modification. Ser208 is modified (phosphoserine). Catalysis depends on His294, which acts as the Proton acceptor. 2 residues coordinate substrate: Arg295 and His327. Residue Thr330 is modified to Phosphothreonine. Residue Ser379 coordinates substrate.

It belongs to the RuBisCO large chain family. Type I subfamily. In terms of assembly, heterohexadecamer of 8 large chains and 8 small chains; disulfide-linked. The disulfide link is formed within the large subunit homodimers. Mg(2+) serves as cofactor. The disulfide bond which can form in the large chain dimeric partners within the hexadecamer appears to be associated with oxidative stress and protein turnover.

The protein resides in the plastid. It localises to the chloroplast. It carries out the reaction 2 (2R)-3-phosphoglycerate + 2 H(+) = D-ribulose 1,5-bisphosphate + CO2 + H2O. The catalysed reaction is D-ribulose 1,5-bisphosphate + O2 = 2-phosphoglycolate + (2R)-3-phosphoglycerate + 2 H(+). In terms of biological role, ruBisCO catalyzes two reactions: the carboxylation of D-ribulose 1,5-bisphosphate, the primary event in carbon dioxide fixation, as well as the oxidative fragmentation of the pentose substrate in the photorespiration process. Both reactions occur simultaneously and in competition at the same active site. The polypeptide is Ribulose bisphosphate carboxylase large chain (Barbarea verna (Land cress)).